Consider the following 233-residue polypeptide: Cilia- and flagella-associated protein 299 (233 aa).

Its subcellular location is the cytoplasm. The protein resides in the nucleus. Functionally, may be involved in spermatogenesis. This chain is Cilia- and flagella-associated protein 299, found in Xenopus laevis (African clawed frog).